The chain runs to 232 residues: Putative N-acetylmannosamine-6-phosphate 2-epimerase (232 aa).

This sequence belongs to the NanE family.

The enzyme catalyses an N-acyl-D-glucosamine 6-phosphate = an N-acyl-D-mannosamine 6-phosphate. It functions in the pathway amino-sugar metabolism; N-acetylneuraminate degradation; D-fructose 6-phosphate from N-acetylneuraminate: step 3/5. Converts N-acetylmannosamine-6-phosphate (ManNAc-6-P) to N-acetylglucosamine-6-phosphate (GlcNAc-6-P). This is Putative N-acetylmannosamine-6-phosphate 2-epimerase from Borreliella afzelii (strain PKo) (Borrelia afzelii).